Consider the following 229-residue polypeptide: Lactate utilization protein C (229 aa).

Belongs to the LutC/YkgG family.

Functionally, is involved in L-lactate degradation and allows cells to grow with lactate as the sole carbon source. The polypeptide is Lactate utilization protein C (Shouchella clausii (strain KSM-K16) (Alkalihalobacillus clausii)).